The sequence spans 268 residues: Tryptophan synthase alpha chain (268 aa).

Catalysis depends on proton acceptor residues glutamate 49 and aspartate 60.

The protein belongs to the TrpA family. Tetramer of two alpha and two beta chains.

It catalyses the reaction (1S,2R)-1-C-(indol-3-yl)glycerol 3-phosphate + L-serine = D-glyceraldehyde 3-phosphate + L-tryptophan + H2O. It participates in amino-acid biosynthesis; L-tryptophan biosynthesis; L-tryptophan from chorismate: step 5/5. Its function is as follows. The alpha subunit is responsible for the aldol cleavage of indoleglycerol phosphate to indole and glyceraldehyde 3-phosphate. The chain is Tryptophan synthase alpha chain from Edwardsiella ictaluri (strain 93-146).